Here is a 139-residue protein sequence, read N- to C-terminus: Peptide methionine sulfoxide reductase MsrB (139 aa).

Residues 9–131 (TPSDNTELTE…NSASLSFIDD (123 aa)) enclose the MsrB domain. Positions 48, 51, 97, and 100 each coordinate Zn(2+). Catalysis depends on cysteine 120, which acts as the Nucleophile.

This sequence belongs to the MsrB Met sulfoxide reductase family. The cofactor is Zn(2+).

It catalyses the reaction L-methionyl-[protein] + [thioredoxin]-disulfide + H2O = L-methionyl-(R)-S-oxide-[protein] + [thioredoxin]-dithiol. The chain is Peptide methionine sulfoxide reductase MsrB from Pectobacterium carotovorum subsp. carotovorum (strain PC1).